The chain runs to 395 residues: 1-deoxy-D-xylulose 5-phosphate reductoisomerase (395 aa).

Positions 10, 11, 12, 13, 38, and 123 each coordinate NADPH. Lys-124 is a 1-deoxy-D-xylulose 5-phosphate binding site. Residue Glu-125 participates in NADPH binding. Residue Asp-149 participates in Mn(2+) binding. Residues Ser-150, Glu-151, Ser-185, and His-208 each coordinate 1-deoxy-D-xylulose 5-phosphate. Residue Glu-151 participates in Mn(2+) binding. NADPH is bound at residue Gly-214. Positions 221, 226, 227, and 230 each coordinate 1-deoxy-D-xylulose 5-phosphate. Position 230 (Glu-230) interacts with Mn(2+).

This sequence belongs to the DXR family. Mg(2+) serves as cofactor. It depends on Mn(2+) as a cofactor.

The catalysed reaction is 2-C-methyl-D-erythritol 4-phosphate + NADP(+) = 1-deoxy-D-xylulose 5-phosphate + NADPH + H(+). It participates in isoprenoid biosynthesis; isopentenyl diphosphate biosynthesis via DXP pathway; isopentenyl diphosphate from 1-deoxy-D-xylulose 5-phosphate: step 1/6. In terms of biological role, catalyzes the NADPH-dependent rearrangement and reduction of 1-deoxy-D-xylulose-5-phosphate (DXP) to 2-C-methyl-D-erythritol 4-phosphate (MEP). This is 1-deoxy-D-xylulose 5-phosphate reductoisomerase from Shewanella woodyi (strain ATCC 51908 / MS32).